We begin with the raw amino-acid sequence, 196 residues long: Potassium-transporting ATPase KdpC subunit (196 aa).

The chain crosses the membrane as a helical span at residues leucine 17–valine 37. The tract at residues glutamine 73–leucine 93 is disordered.

Belongs to the KdpC family. As to quaternary structure, the system is composed of three essential subunits: KdpA, KdpB and KdpC.

The protein localises to the cell membrane. In terms of biological role, part of the high-affinity ATP-driven potassium transport (or Kdp) system, which catalyzes the hydrolysis of ATP coupled with the electrogenic transport of potassium into the cytoplasm. This subunit acts as a catalytic chaperone that increases the ATP-binding affinity of the ATP-hydrolyzing subunit KdpB by the formation of a transient KdpB/KdpC/ATP ternary complex. This is Potassium-transporting ATPase KdpC subunit from Kineococcus radiotolerans (strain ATCC BAA-149 / DSM 14245 / SRS30216).